A 340-amino-acid polypeptide reads, in one-letter code: Functional amyloid subunit FapC (340 aa).

Residues 1–24 (MKATMVLTPLALAMAAVLSVSAYA) form the signal peptide. A FapC_R1 repeat occupies 67 to 100 (NNASVSGSIKDASGNVGVNVAAGDNNQQANAAAL). The linker 1 stretch occupies residues 101–133 (ASADASFVFGTATASTSVLQSGYGNTLNNYSNP). One copy of the FapC_R2 repeat lies at 134-167 (NTASLSNSANNVSGNLGVNVAAGNFNQQKNDLAA). Residues 168–290 (AVSNGQYSTA…AIVGFKTPVT (123 aa)) are linker 2. Residues 291 to 324 (NNASLSNSLQNVSGNVGVNIAAGGGNQQSNSLSI) form a FapC_R3 repeat. A Cys-X-X-Cys motif is present at residues 328–331 (CSSC).

Belongs to the FapB/FapC family. In terms of assembly, the major component of purified amyloid fibrils. Fibrils are resistant to boiling in 2% (weight/vol) SDS and require &gt;90% (vol/vol) formic acid to dissolve. Interacts with FapA in vitro.

It localises to the fimbrium. It is found in the secreted. Its function is as follows. The major functional amyloid subunit in this bacterium. Upon overexpression of the endogenous six-gene locus (fapA-fapF), cells form large clumps during liquid growth, make large amounts of biofilm and produce amyloid fibrils. The polypeptide is Functional amyloid subunit FapC (Pseudomonas aeruginosa (strain ATCC 15692 / DSM 22644 / CIP 104116 / JCM 14847 / LMG 12228 / 1C / PRS 101 / PAO1)).